The following is a 131-amino-acid chain: Aspartate 1-decarboxylase (131 aa).

S25 acts as the Schiff-base intermediate with substrate; via pyruvic acid in catalysis. Residue S25 is modified to Pyruvic acid (Ser). T57 lines the substrate pocket. Catalysis depends on Y58, which acts as the Proton donor. Position 73–75 (73–75 (GAA)) interacts with substrate.

The protein belongs to the PanD family. In terms of assembly, heterooctamer of four alpha and four beta subunits. The cofactor is pyruvate. Is synthesized initially as an inactive proenzyme, which is activated by self-cleavage at a specific serine bond to produce a beta-subunit with a hydroxyl group at its C-terminus and an alpha-subunit with a pyruvoyl group at its N-terminus.

The protein localises to the cytoplasm. The catalysed reaction is L-aspartate + H(+) = beta-alanine + CO2. Its pathway is cofactor biosynthesis; (R)-pantothenate biosynthesis; beta-alanine from L-aspartate: step 1/1. In terms of biological role, catalyzes the pyruvoyl-dependent decarboxylation of aspartate to produce beta-alanine. The sequence is that of Aspartate 1-decarboxylase from Anaeromyxobacter sp. (strain Fw109-5).